The sequence spans 116 residues: UPF0298 protein EF_2453 (116 aa).

This sequence belongs to the UPF0298 family.

Its subcellular location is the cytoplasm. The polypeptide is UPF0298 protein EF_2453 (Enterococcus faecalis (strain ATCC 700802 / V583)).